The primary structure comprises 82 residues: Small ribosomal subunit protein uS17 (82 aa).

This sequence belongs to the universal ribosomal protein uS17 family. Part of the 30S ribosomal subunit.

Its function is as follows. One of the primary rRNA binding proteins, it binds specifically to the 5'-end of 16S ribosomal RNA. The polypeptide is Small ribosomal subunit protein uS17 (Shewanella sediminis (strain HAW-EB3)).